A 472-amino-acid polypeptide reads, in one-letter code: 3-isopropylmalate dehydratase large subunit (472 aa).

Residues cysteine 347, cysteine 407, and cysteine 410 each contribute to the [4Fe-4S] cluster site.

Belongs to the aconitase/IPM isomerase family. LeuC type 1 subfamily. In terms of assembly, heterodimer of LeuC and LeuD. Requires [4Fe-4S] cluster as cofactor.

The catalysed reaction is (2R,3S)-3-isopropylmalate = (2S)-2-isopropylmalate. It functions in the pathway amino-acid biosynthesis; L-leucine biosynthesis; L-leucine from 3-methyl-2-oxobutanoate: step 2/4. In terms of biological role, catalyzes the isomerization between 2-isopropylmalate and 3-isopropylmalate, via the formation of 2-isopropylmaleate. The polypeptide is 3-isopropylmalate dehydratase large subunit (Synechococcus sp. (strain CC9605)).